A 512-amino-acid chain; its full sequence is ATP synthase subunit alpha (512 aa).

Glycine 169–threonine 176 is an ATP binding site.

The protein belongs to the ATPase alpha/beta chains family. F-type ATPases have 2 components, CF(1) - the catalytic core - and CF(0) - the membrane proton channel. CF(1) has five subunits: alpha(3), beta(3), gamma(1), delta(1), epsilon(1). CF(0) has three main subunits: a(1), b(2) and c(9-12). The alpha and beta chains form an alternating ring which encloses part of the gamma chain. CF(1) is attached to CF(0) by a central stalk formed by the gamma and epsilon chains, while a peripheral stalk is formed by the delta and b chains.

The protein resides in the cell membrane. The catalysed reaction is ATP + H2O + 4 H(+)(in) = ADP + phosphate + 5 H(+)(out). Produces ATP from ADP in the presence of a proton gradient across the membrane. The alpha chain is a regulatory subunit. In Elusimicrobium minutum (strain Pei191), this protein is ATP synthase subunit alpha.